A 250-amino-acid chain; its full sequence is 5'-nucleotidase SurE (250 aa).

The a divalent metal cation site is built by D9, D10, S40, and N92.

Belongs to the SurE nucleotidase family. Requires a divalent metal cation as cofactor.

It is found in the cytoplasm. The catalysed reaction is a ribonucleoside 5'-phosphate + H2O = a ribonucleoside + phosphate. In terms of biological role, nucleotidase that shows phosphatase activity on nucleoside 5'-monophosphates. In Shewanella pealeana (strain ATCC 700345 / ANG-SQ1), this protein is 5'-nucleotidase SurE.